Consider the following 130-residue polypeptide: Histone H2A.6 (130 aa).

Residues 1–12 (MAGRGKTLGSGG) show a composition bias toward gly residues. The disordered stretch occupies residues 1-23 (MAGRGKTLGSGGAKKATSRSSKA).

The protein belongs to the histone H2A family. The nucleosome is a histone octamer containing two molecules each of H2A, H2B, H3 and H4 assembled in one H3-H4 heterotetramer and two H2A-H2B heterodimers. The octamer wraps approximately 147 bp of DNA. Interacts with VIP1. In terms of processing, not ubiquitinated. In terms of tissue distribution, low level of expression, mainly in dividing tissues: floral buds, margins of newly emerging leaves, expanding leaves and the meristematic zone of root tips. Also expressed in many non-dividing cells of the elongation zone of the root.

It localises to the nucleus. Its subcellular location is the chromosome. Core component of nucleosome. Nucleosomes wrap and compact DNA into chromatin, limiting DNA accessibility to the cellular machineries which require DNA as a template. Histones thereby play a central role in transcription regulation, DNA repair, DNA replication and chromosomal stability. DNA accessibility is regulated via a complex set of post-translational modifications of histones, also called histone code, and nucleosome remodeling. Required for the T-DNA integration step of plant transformation by Agrobacterium. May play an important role in illegitimate recombination. The polypeptide is Histone H2A.6 (RAT5) (Arabidopsis thaliana (Mouse-ear cress)).